We begin with the raw amino-acid sequence, 367 residues long: Ribosomal lysine N-methyltransferase 5 (367 aa).

A disordered region spans residues 55–74 (EGGRKKKRVRRRNKASSVEE). Positions 58–68 (RKKKRVRRRNK) are enriched in basic residues. Residues Trp110, 170-172 (GAG), Asp192, Trp256, and Met288 contribute to the S-adenosyl-L-methionine site.

This sequence belongs to the class I-like SAM-binding methyltransferase superfamily. RKM5 family.

S-adenosyl-L-methionine-dependent protein-lysine N-methyltransferase that monomethylates 60S ribosomal protein L1 (RPL1A and RPL1B) at 'Lys-46'. The sequence is that of Ribosomal lysine N-methyltransferase 5 (RKM5) from Saccharomyces cerevisiae (strain Lalvin EC1118 / Prise de mousse) (Baker's yeast).